Consider the following 161-residue polypeptide: Ribonuclease P protein component (161 aa).

This sequence belongs to the RnpA family. In terms of assembly, consists of a catalytic RNA component (M1 or rnpB) and a protein subunit.

It carries out the reaction Endonucleolytic cleavage of RNA, removing 5'-extranucleotides from tRNA precursor.. In terms of biological role, RNaseP catalyzes the removal of the 5'-leader sequence from pre-tRNA to produce the mature 5'-terminus. It can also cleave other RNA substrates such as 4.5S RNA. The protein component plays an auxiliary but essential role in vivo by binding to the 5'-leader sequence and broadening the substrate specificity of the ribozyme. The chain is Ribonuclease P protein component from Helicobacter pylori (strain Shi470).